The sequence spans 79 residues: Sulfur carrier protein TusA (79 aa).

The active-site Cysteine persulfide intermediate is C17.

This sequence belongs to the sulfur carrier protein TusA family.

It is found in the cytoplasm. In terms of biological role, sulfur carrier protein which probably makes part of a sulfur-relay system. This Histophilus somni (strain 129Pt) (Haemophilus somnus) protein is Sulfur carrier protein TusA.